We begin with the raw amino-acid sequence, 295 residues long: Multistep phosphorelay regulator 1 (295 aa).

The tract at residues 89 to 110 (KSENNQQLAANETAGAPEGTEE) is disordered. The span at 97-106 (AANETAGAPE) shows a compositional bias: low complexity. Positions 182-284 (EHEFSKSIVW…NDFYKDARAY (103 aa)) constitute an HPt domain. H221 carries the post-translational modification Phosphohistidine.

In terms of biological role, binds to the msc4 response regulator which is part of a multistep phosphorelay system that transmits oxidative stress signals to the spc1 MAPK cascade. The chain is Multistep phosphorelay regulator 1 (mpr1) from Schizosaccharomyces pombe (strain 972 / ATCC 24843) (Fission yeast).